The primary structure comprises 2156 residues: MAM and LDL-receptor class A domain-containing protein 1 (2156 aa).

The N-terminal stretch at 1-31 is a signal peptide; sequence MLFFLDRMLAFPMNETFCCLWIACVFNSTLA. At 32–2076 the chain is on the vesicular side; sequence QQGTESFQCD…FTYAQNNTWT (2045 aa). Residues 33–68 enclose the LDL-receptor class A 1 domain; the sequence is QGTESFQCDNGVSLPPDSICDFTDQCGDSSDERHCL. 2 cysteine pairs are disulfide-bonded: C40/C58 and C52/C67. MAM domains lie at 71-229 and 268-427; these read ERCD…GCLP and QACG…ACGQ. One can recognise an LDL-receptor class A 2 domain in the interval 433–471; the sequence is LCSADEFPCTSGQCIAKESVCDSRQDCSDESDEDPATCS. Cystine bridges form between C434-C446, C441-C459, and C453-C470. MAM domains follow at residues 474 to 637 and 652 to 816; these read LTCD…ECEI and SKCD…NCTL. A glycan (N-linked (GlcNAc...) asparagine) is linked at N813. An LDL-receptor class A 3 domain is found at 822 to 860; that stretch reads SCEGLDHFWCRHTRACIEKLRLCDLVDDCGDRTDEVNCA. 3 disulfide bridges follow: C823–C837, C831–C850, and C844–C859. The MAM 5 domain maps to 863-1024; that stretch reads LQCNFETGIC…DDLSFMDCTL (162 aa). N1049 carries an N-linked (GlcNAc...) asparagine glycan. The 38-residue stretch at 1049 to 1086 folds into the LDL-receptor class A 4 domain; sequence NCTDNEFICRSDGHCIEKMQKCDFKYDCPDKSDEASCV. Intrachain disulfides connect C1050-C1063, C1057-C1076, and C1070-C1085. In terms of domain architecture, MAM 6 spans 1088–1256; that stretch reads EVCSFEKRSL…DDISFQDCSP (169 aa). N1199 carries N-linked (GlcNAc...) asparagine glycosylation. An LDL-receptor class A 5 domain is found at 1263–1301; it reads KCTDHEFMCANKHCIAKDKLCDFVNDCADNSDETTFICR. Disulfide bonds link C1264-C1276, C1271-C1289, and C1283-C1300. The 161-residue stretch at 1305 to 1465 folds into the MAM 7 domain; the sequence is GRCDFEFDLC…DIVLTENCLS (161 aa). N1414 carries an N-linked (GlcNAc...) asparagine glycan. One can recognise an LDL-receptor class A 6 domain in the interval 1482–1518; sequence FCPLGYRECHNGKCYRLEQSCNFVDNCGDNTDENECG. Intrachain disulfides connect C1483/C1495, C1490/C1508, and C1502/C1517. The MAM 8 domain maps to 1519-1676; that stretch reads SSCTFEKGWC…DDIEFKNCTT (158 aa). The region spanning 1683–1720 is the LDL-receptor class A 7 domain; sequence LCPEITDFLCRDKKCIASHLLCDYKPDCSDRSDEAHCA. Disulfide bonds link C1684/C1697, C1692/C1710, and C1704/C1719. The 166-residue stretch at 1727 to 1892 folds into the MAM 9 domain; that stretch reads GSCNFETSSG…DISFTPECVT (166 aa). LDL-receptor class A domains lie at 1902–1939, 1946–1982, and 1985–2023; these read PCEA…MDCP, LCSN…LICS, and SCSN…SSCS. 12 disulfide bridges follow: C1903–C1916, C1910–C1929, C1923–C1938, C1947–C1959, C1954–C1972, C1966–C1981, C1986–C1999, C1993–C2012, C2006–C2022, C2025–C2036, C2030–C2045, and C2047–C2056. The 34-residue stretch at 2024–2057 folds into the EGF-like domain; that stretch reads ECPLNYCRNGGTCVVEKNGPMCRCRQGWKGNRCH. Residues 2077–2097 form a helical membrane-spanning segment; the sequence is LLGIGLAFLMTHITVAVLCFL. Residues 2098-2156 are Cytoplasmic-facing; it reads ANRKVPIRKTEGSGNCAFVNPVYGNWSNPEKTESSVYSFSNPLYGTTSGSLETLSHHLK.

Interacts with FGF19. As to expression, strongly expressed in the small intestine.

It localises to the cytoplasmic vesicle membrane. Functionally, enhances production and/or transport of FGF19 and thus has a role in regulation of bile acid synthesis. This is MAM and LDL-receptor class A domain-containing protein 1 from Homo sapiens (Human).